Consider the following 3032-residue polypeptide: DmX-like protein 2 (3032 aa).

WD repeat units follow at residues 108 to 145 (FLSSVTYNLAWDPQDNRLLTATDSIQLWAPPGGDILEE), 167 to 207 (KTSV…KSSI), and 230 to 278 (AHPR…EDCL). Position 326 is a phosphoserine (Ser-326). The segment at 418–486 (QLDHESDDAD…HPRPSISMPL (69 aa)) is disordered. Acidic residues predominate over residues 422-434 (ESDDADREDEERS). Residues 435-474 (QDERERGLRMKLDHELSLDRESEAGTGSSEHEDGEREGSP) show a composition bias toward basic and acidic residues. Ser-473 is subject to Phosphoserine. A WD 4 repeat occupies 492 to 532 (DRKIETLLTEWNKNPDMLFTIHPVDGTFLVWHVKYLDEYNP). A disordered region spans residues 577–598 (PSQQEMMSVDSPHGSQLHSPSH). The residue at position 587 (Ser-587) is a Phosphoserine. Over residues 589–598 (HGSQLHSPSH) the composition is skewed to polar residues. WD repeat units follow at residues 594–633 (HSPSHSTDMNILAPTVMMVSKHIDGSLNQWAVTFADKSAF), 750–802 (LHTS…RKLL), and 879–921 (QPSQ…VQAC). Residues 937-958 (VPGQKNLDSSPETSSSMSSVPH) form a disordered region. Phosphoserine is present on residues Ser-945 and Ser-946. A compositionally biased stretch (low complexity) spans 945–958 (SSPETSSSMSSVPH). The stretch at 1001–1038 (LSSSSIYPVCLAPYLVVTTCSDNKVRFWKCCMETNSLG) is one WD 8 repeat. 3 positions are modified to phosphoserine: Ser-1141, Ser-1144, and Ser-1152. 2 WD repeats span residues 1164–1205 (PNIK…VSDQ) and 1245–1285 (GTPS…GNVD). Residues Ser-1288 and Ser-1399 each carry the phosphoserine modification. Thr-1416 is modified (phosphothreonine). A disordered region spans residues 1443–1464 (RISEDSTKKPQSYEDHIESQSE). Residues 1444–1461 (ISEDSTKKPQSYEDHIES) are compositionally biased toward basic and acidic residues. Position 1856 is a phosphoserine (Ser-1856). A disordered region spans residues 1922–1953 (QLDSVSGRMENGPSESKPVSRSDGGSGADWSA). At Thr-2017 the chain carries Phosphothreonine. Residues 2117 to 2146 (GSYERHQIERRRLQAKREHAERRKLWLQKN) are a coiled coil. Ser-2394 and Ser-2636 each carry phosphoserine. Positions 2722-2732 (QPGAASHSSSQ) are enriched in low complexity. The segment at 2722-2744 (QPGAASHSSSQPHPPPSLPWLGS) is disordered. WD repeat units lie at residues 2757-2796 (RNLHNVKRMTSHPVHQYYLTGAQDGSVRMFEWTRPQQLVC), 2800-2839 (AGNARVTRLYFNSQGNKCGVADGEGFLSIWQVNQTASNPK), 2846-2888 (CHSK…GNSL), 2894-2933 (CHDHGATVLQYAPKQQLLISGGRKGYICIFDIRQRQLIHT), 2936-2975 (AHDSAIKALALDSCEEYFTTGSAEGNIKVWRLTGHGLIHS), and 2988-3026 (NIGAGVMQIAISQDNRLFSCGADGTLKTRVLPSAFNIPN).

In terms of assembly, interacts with MADD and RAB3GAP. Expressed in the brain and pituitary gland. Detected in the hippocampus, dentate gyrus, hypothalamus, pyriform cortex and the granular and molecular layers of the cerebellum of adult animals. In the hypothalamus, expression is observed in the arcuate nucleus, the ME, the organum vasculosum of the lamina terminalis, and the subfornical organ, the subcommissural organ, and the suprachiasmatic nucleus. Both tanycytes and hypothalamic neurosecretory neurons express the protein. Expressed in the inner and outer hair cells as well as in the spiral ganglion neurons. Expressed in insulin-secreting cells of the islets of Langerhans in the pancreas.

Its subcellular location is the cytoplasmic vesicle. It is found in the secretory vesicle. The protein resides in the synaptic vesicle membrane. The protein localises to the neuronal dense core vesicle. In terms of biological role, may serve as a scaffold protein for MADD and RAB3GA on synaptic vesicles of neuronal and endocrine homeostatic processes. Plays a role in the brain as a key controller of neuronal and endocrine homeostatic processes. In Mus musculus (Mouse), this protein is DmX-like protein 2 (Dmxl2).